The sequence spans 367 residues: Alginate lyase (367 aa).

Positions 1 to 24 are cleaved as a signal peptide; sequence MTIINRKTAPALLALALFGGAAQA. Substrate contacts are provided by residues 63–64, 136–137, and Y254; these read SK and HT.

Belongs to the polysaccharide lyase 5 family.

The protein localises to the periplasm. It carries out the reaction Eliminative cleavage of alginate to give oligosaccharides with 4-deoxy-alpha-L-erythro-hex-4-enuronosyl groups at their non-reducing ends and beta-D-mannuronate at their reducing end.. Functionally, catalyzes the depolymerization of alginate by cleaving the beta-1,4 glycosidic bond between two adjacent sugar residues via a beta-elimination mechanism. May serve to degrade mislocalized alginate that is trapped in the periplasmic space. The polypeptide is Alginate lyase (Pseudomonas entomophila (strain L48)).